A 1183-amino-acid chain; its full sequence is Chromosome partition protein Smc (1183 aa).

Residue 32 to 39 (PNGSGKSN) participates in ATP binding. Residues 162–483 (EEAAGIKKLQ…KLSQDIREFE (322 aa)) adopt a coiled-coil conformation. Positions 519–632 (SGIDGVLISL…VENIDIATDI (114 aa)) constitute an SMC hinge domain. Residues 666–1019 (INQIFERKKE…VMDLIQEIDE (354 aa)) are a coiled coil.

It belongs to the SMC family. Homodimer.

Its subcellular location is the cytoplasm. Functionally, required for chromosome condensation and partitioning. The polypeptide is Chromosome partition protein Smc (Fusobacterium nucleatum subsp. nucleatum (strain ATCC 25586 / DSM 15643 / BCRC 10681 / CIP 101130 / JCM 8532 / KCTC 2640 / LMG 13131 / VPI 4355)).